Consider the following 268-residue polypeptide: Shikimate dehydrogenase (NADP(+)) (268 aa).

Residues 13-15 (SLS) and Thr60 each bind shikimate. Residue Lys64 is the Proton acceptor of the active site. Glu76 contributes to the NADP(+) binding site. The shikimate site is built by Asn85 and Asp100. NADP(+)-binding positions include 124-128 (GAGGA), 148-153 (NRTMAR), and Ile209. Position 211 (Tyr211) interacts with shikimate. Gly232 contacts NADP(+).

The protein belongs to the shikimate dehydrogenase family. As to quaternary structure, homodimer.

It catalyses the reaction shikimate + NADP(+) = 3-dehydroshikimate + NADPH + H(+). It functions in the pathway metabolic intermediate biosynthesis; chorismate biosynthesis; chorismate from D-erythrose 4-phosphate and phosphoenolpyruvate: step 4/7. In terms of biological role, involved in the biosynthesis of the chorismate, which leads to the biosynthesis of aromatic amino acids. Catalyzes the reversible NADPH linked reduction of 3-dehydroshikimate (DHSA) to yield shikimate (SA). This Staphylococcus aureus (strain JH1) protein is Shikimate dehydrogenase (NADP(+)).